The following is a 168-amino-acid chain: 3-hydroxyacyl-[acyl-carrier-protein] dehydratase FabZ (168 aa).

Residue H54 is part of the active site.

It belongs to the thioester dehydratase family. FabZ subfamily.

The protein resides in the cytoplasm. It carries out the reaction a (3R)-hydroxyacyl-[ACP] = a (2E)-enoyl-[ACP] + H2O. In terms of biological role, involved in unsaturated fatty acids biosynthesis. Catalyzes the dehydration of short chain beta-hydroxyacyl-ACPs and long chain saturated and unsaturated beta-hydroxyacyl-ACPs. This Yersinia enterocolitica serotype O:8 / biotype 1B (strain NCTC 13174 / 8081) protein is 3-hydroxyacyl-[acyl-carrier-protein] dehydratase FabZ.